We begin with the raw amino-acid sequence, 252 residues long: N-glycosylase/DNA lyase (252 aa).

8-oxoguanine is bound by residues Gln32, Ser60, and Trp71. The segment at 129 to 193 is helix-hairpin-helix; sequence KTYYSDMEKL…KDSRIEKYTL (65 aa). Lys153 serves as the catalytic Schiff-base intermediate with DNA. Phe157 and Pro183 together coordinate 8-oxoguanine. Residue Asp185 is part of the active site. 8-oxoguanine-binding residues include Asp219 and Trp223.

Belongs to the archaeal N-glycosylase/DNA lyase (AGOG) family.

It carries out the reaction 2'-deoxyribonucleotide-(2'-deoxyribose 5'-phosphate)-2'-deoxyribonucleotide-DNA = a 3'-end 2'-deoxyribonucleotide-(2,3-dehydro-2,3-deoxyribose 5'-phosphate)-DNA + a 5'-end 5'-phospho-2'-deoxyribonucleoside-DNA + H(+). DNA repair enzyme that is part of the base excision repair (BER) pathway; protects from oxidative damage by removing the major product of DNA oxidation, 8-oxoguanine (GO), from single- and double-stranded DNA substrates. The polypeptide is N-glycosylase/DNA lyase (Methanococcus maripaludis (strain DSM 14266 / JCM 13030 / NBRC 101832 / S2 / LL)).